Here is a 173-residue protein sequence, read N- to C-terminus: Crossover junction endodeoxyribonuclease RuvC (173 aa).

Active-site residues include aspartate 8, glutamate 67, and aspartate 139. The Mg(2+) site is built by aspartate 8, glutamate 67, and aspartate 139.

Belongs to the RuvC family. In terms of assembly, homodimer which binds Holliday junction (HJ) DNA. The HJ becomes 2-fold symmetrical on binding to RuvC with unstacked arms; it has a different conformation from HJ DNA in complex with RuvA. In the full resolvosome a probable DNA-RuvA(4)-RuvB(12)-RuvC(2) complex forms which resolves the HJ. The cofactor is Mg(2+).

The protein resides in the cytoplasm. It carries out the reaction Endonucleolytic cleavage at a junction such as a reciprocal single-stranded crossover between two homologous DNA duplexes (Holliday junction).. Its function is as follows. The RuvA-RuvB-RuvC complex processes Holliday junction (HJ) DNA during genetic recombination and DNA repair. Endonuclease that resolves HJ intermediates. Cleaves cruciform DNA by making single-stranded nicks across the HJ at symmetrical positions within the homologous arms, yielding a 5'-phosphate and a 3'-hydroxyl group; requires a central core of homology in the junction. The consensus cleavage sequence is 5'-(A/T)TT(C/G)-3'. Cleavage occurs on the 3'-side of the TT dinucleotide at the point of strand exchange. HJ branch migration catalyzed by RuvA-RuvB allows RuvC to scan DNA until it finds its consensus sequence, where it cleaves and resolves the cruciform DNA. The protein is Crossover junction endodeoxyribonuclease RuvC of Cronobacter sakazakii (strain ATCC BAA-894) (Enterobacter sakazakii).